A 65-amino-acid chain; its full sequence is Putative antitoxin MJECL31 (65 aa).

Belongs to the UPF0165 family.

Possibly the antitoxin component of a type II toxin-antitoxin (TA) system. The chain is Putative antitoxin MJECL31 from Methanocaldococcus jannaschii (strain ATCC 43067 / DSM 2661 / JAL-1 / JCM 10045 / NBRC 100440) (Methanococcus jannaschii).